Here is a 264-residue protein sequence, read N- to C-terminus: Thiazole synthase (264 aa).

Catalysis depends on Lys-104, which acts as the Schiff-base intermediate with DXP. 1-deoxy-D-xylulose 5-phosphate-binding positions include Gly-165, 191–192 (AG), and 213–214 (NT).

It belongs to the ThiG family. In terms of assembly, homotetramer. Forms heterodimers with either ThiH or ThiS.

The protein localises to the cytoplasm. The enzyme catalyses [ThiS sulfur-carrier protein]-C-terminal-Gly-aminoethanethioate + 2-iminoacetate + 1-deoxy-D-xylulose 5-phosphate = [ThiS sulfur-carrier protein]-C-terminal Gly-Gly + 2-[(2R,5Z)-2-carboxy-4-methylthiazol-5(2H)-ylidene]ethyl phosphate + 2 H2O + H(+). The protein operates within cofactor biosynthesis; thiamine diphosphate biosynthesis. Catalyzes the rearrangement of 1-deoxy-D-xylulose 5-phosphate (DXP) to produce the thiazole phosphate moiety of thiamine. Sulfur is provided by the thiocarboxylate moiety of the carrier protein ThiS. In vitro, sulfur can be provided by H(2)S. This is Thiazole synthase from Oleidesulfovibrio alaskensis (strain ATCC BAA-1058 / DSM 17464 / G20) (Desulfovibrio alaskensis).